The primary structure comprises 392 residues: Galactokinase (392 aa).

Residue 33-36 (EHTD) coordinates substrate. ATP-binding positions include S67 and 129 to 135 (GSGLSSS). 2 residues coordinate Mg(2+): S135 and E167. D179 (proton acceptor) is an active-site residue. Y229 provides a ligand contact to substrate.

It belongs to the GHMP kinase family. GalK subfamily.

The protein localises to the cytoplasm. It carries out the reaction alpha-D-galactose + ATP = alpha-D-galactose 1-phosphate + ADP + H(+). The protein operates within carbohydrate metabolism; galactose metabolism. Catalyzes the transfer of the gamma-phosphate of ATP to D-galactose to form alpha-D-galactose-1-phosphate (Gal-1-P). The polypeptide is Galactokinase (Limosilactobacillus reuteri (strain DSM 20016) (Lactobacillus reuteri)).